Reading from the N-terminus, the 421-residue chain is Putative zinc finger protein R05D3.3 (421 aa).

2 consecutive C2H2-type zinc fingers follow at residues 207–228 (VLCV…IEAH) and 234–257 (YKCS…RTQH). Residues 400-421 (GSSITDSNEPGPSEIKKELAEV) are disordered.

It localises to the nucleus. The sequence is that of Putative zinc finger protein R05D3.3 from Caenorhabditis elegans.